A 232-amino-acid chain; its full sequence is Ribose-5-phosphate isomerase A (232 aa).

Substrate is bound by residues 29-32 (SGST), 86-89 (DGAD), and 99-102 (KGGG). Residue Glu108 is the Proton acceptor of the active site. Substrate is bound at residue Lys126.

Belongs to the ribose 5-phosphate isomerase family. In terms of assembly, homodimer.

The catalysed reaction is aldehydo-D-ribose 5-phosphate = D-ribulose 5-phosphate. It participates in carbohydrate degradation; pentose phosphate pathway; D-ribose 5-phosphate from D-ribulose 5-phosphate (non-oxidative stage): step 1/1. In terms of biological role, catalyzes the reversible conversion of ribose-5-phosphate to ribulose 5-phosphate. The sequence is that of Ribose-5-phosphate isomerase A from Synechococcus sp. (strain ATCC 27144 / PCC 6301 / SAUG 1402/1) (Anacystis nidulans).